The chain runs to 93 residues: MADITDIKTILYTEKSLNLQEQGVVVIQTSPKMTKNGLKEVLREYFGVTPVRINSLKMDGKIKRFRGREGQRNSFKKFYVKLPEGVSLESSEA.

Belongs to the universal ribosomal protein uL23 family. As to quaternary structure, part of the 50S ribosomal subunit. Contacts protein L29, and trigger factor when it is bound to the ribosome.

Its function is as follows. One of the early assembly proteins it binds 23S rRNA. One of the proteins that surrounds the polypeptide exit tunnel on the outside of the ribosome. Forms the main docking site for trigger factor binding to the ribosome. The protein is Large ribosomal subunit protein uL23 of Campylobacter lari (strain RM2100 / D67 / ATCC BAA-1060).